Consider the following 449-residue polypeptide: Gallate transporter (449 aa).

12 helical membrane passes run 26–46, 62–82, 92–112, 123–143, 155–175, 183–203, 262–282, 298–318, 326–346, 349–369, 388–408, and 414–434; these read WLIL…VAVM, AAFG…ALTA, KKVL…CAFA, LLTG…LAEY, IMFT…AWLI, VLLA…WLLP, LALW…MGWL, TITG…GWIM, VIAI…ALSL, SLLV…QTAL, WMLG…GAVL, and LPLL…AILA.

This sequence belongs to the major facilitator superfamily. Sugar transporter (TC 2.A.1.1) family.

Its subcellular location is the membrane. Transporter that specifically mediates the uptake of gallate. The protein is Gallate transporter (galT) of Pseudomonas putida (Arthrobacter siderocapsulatus).